Reading from the N-terminus, the 648-residue chain is MSAADPSQGNKSWTVADSAALYGLDRWGEPYFTANANGHVQVKPRGDQGSCLDLVELVEELKSRNLNLPLLIRFDDILEDRLEKLHSAFEQAISKYGYAGRYQGVFPVKCNQQRHVVEQLVESGRHWHFGLEAGSKAELLIALSLVNDPEALLICNGYKDQRYIETAILARRLGRQPVVVIEQPDEVERIIRSSQELGAAPFIGVRAKLTTRSTGHWSSSVGEKAKFGLSFPDLLSTVEALRQADLLSDLRLLHFHIGSQINDIAVLKDAIQEAGQIYVELTKLGAPMGYLDVGGGLGVDYDGSRSASAASTNYSLQNYANDVVATVRECCKPHGITLPILVSESGRAIASHFSILVFDVLGTGTVPGAVPNQTGEEPLTIHNLRETLAGVMATQKGAASEISRLQEAWNDAVKFKDDALAAFRLGYISLTERALAEQLTWACAEAIMGQLPCHETIPDDLQGLRAVLAGTYYANLSIFRSAPDTWAIEQLFPLMPIHRLKEEPTQLGHFADLTCDSDGKLDRFIGNGQTKTLLELHNLRQNEAYMIGMFLAGAYQEVMGNLHNLFGSTNAVHIRMTTGGGYQIDHVVRGNTNSEVLEAMEHNPEILLERLRLASELAIQRGELKINDVRRLMDHLETSLRQTTYLQG.

An N6-(pyridoxal phosphate)lysine modification is found at K109. 291–301 serves as a coordination point for substrate; it reads LDVGGGLGVDY.

Belongs to the Orn/Lys/Arg decarboxylase class-II family. SpeA subfamily. Mg(2+) is required as a cofactor. Pyridoxal 5'-phosphate serves as cofactor.

It catalyses the reaction L-arginine + H(+) = agmatine + CO2. It functions in the pathway amine and polyamine biosynthesis; agmatine biosynthesis; agmatine from L-arginine: step 1/1. In terms of biological role, catalyzes the biosynthesis of agmatine from arginine. This is Biosynthetic arginine decarboxylase from Prochlorococcus marinus (strain MIT 9303).